A 335-amino-acid chain; its full sequence is Large ribosomal subunit protein uL3 (335 aa).

The segment at 1-20 (MATIHRPRRGSLAFSPRKRA) is disordered.

Belongs to the universal ribosomal protein uL3 family. As to quaternary structure, part of the 50S ribosomal subunit. Forms a cluster with proteins L14 and L24e.

Its function is as follows. One of the primary rRNA binding proteins, it binds directly near the 3'-end of the 23S rRNA, where it nucleates assembly of the 50S subunit. The sequence is that of Large ribosomal subunit protein uL3 from Methanothrix thermoacetophila (strain DSM 6194 / JCM 14653 / NBRC 101360 / PT) (Methanosaeta thermophila).